Reading from the N-terminus, the 604-residue chain is Procollagen galactosyltransferase 1 (604 aa).

Positions 1–18 (MHLLCFFFLLLWTGPARS) are cleaved as a signal peptide. 4 N-linked (GlcNAc...) asparagine glycosylation sites follow: Asn-78, Asn-166, Asn-363, and Asn-561. A compositionally biased stretch (basic and acidic residues) spans 570 to 580 (RARSRKSREQE). Residues 570-604 (RARSRKSREQEELSSEAQNTDVLQSPLDSTARDEL) are disordered. Polar residues predominate over residues 584–597 (SEAQNTDVLQSPLD). Positions 601–604 (RDEL) match the Prevents secretion from ER motif.

It belongs to the glycosyltransferase 25 family.

The protein resides in the endoplasmic reticulum lumen. It catalyses the reaction (5R)-5-hydroxy-L-lysyl-[collagen] + UDP-alpha-D-galactose = (5R)-5-O-(beta-D-galactosyl)-5-hydroxy-L-lysyl-[collagen] + UDP + H(+). Beta-galactosyltransferase that transfers beta-galactose to hydroxylysine residues of type I collagen. By acting on collagen glycosylation, facilitates the formation of collagen triple helix. The polypeptide is Procollagen galactosyltransferase 1 (colgalt1) (Danio rerio (Zebrafish)).